Reading from the N-terminus, the 172-residue chain is ATP synthase subunit b (172 aa).

Residues 18–38 form a helical membrane-spanning segment; that stretch reads IVWSLIILVIVAVFFYKFFMP.

It belongs to the ATPase B chain family. In terms of assembly, F-type ATPases have 2 components, F(1) - the catalytic core - and F(0) - the membrane proton channel. F(1) has five subunits: alpha(3), beta(3), gamma(1), delta(1), epsilon(1). F(0) has three main subunits: a(1), b(2) and c(10-14). The alpha and beta chains form an alternating ring which encloses part of the gamma chain. F(1) is attached to F(0) by a central stalk formed by the gamma and epsilon chains, while a peripheral stalk is formed by the delta and b chains.

The protein localises to the cell membrane. In terms of biological role, f(1)F(0) ATP synthase produces ATP from ADP in the presence of a proton or sodium gradient. F-type ATPases consist of two structural domains, F(1) containing the extramembraneous catalytic core and F(0) containing the membrane proton channel, linked together by a central stalk and a peripheral stalk. During catalysis, ATP synthesis in the catalytic domain of F(1) is coupled via a rotary mechanism of the central stalk subunits to proton translocation. Its function is as follows. Component of the F(0) channel, it forms part of the peripheral stalk, linking F(1) to F(0). The chain is ATP synthase subunit b from Bifidobacterium longum (strain DJO10A).